The primary structure comprises 359 residues: Type-1 angiotensin II receptor (359 aa).

The Extracellular segment spans residues 1 to 25 (MILNSSTEDGIKRIQDDCPKAGRHS). N-linked (GlcNAc...) asparagine glycosylation occurs at Asn-4. 2 residues coordinate angiotensin II: Gln-15 and Asp-17. Intrachain disulfides connect Cys-18–Cys-274 and Cys-101–Cys-180. The helical transmembrane segment at 26–55 (YIFVMIPTLYSIIFVVGIFGNSLVVIVIYF) threads the bilayer. Over 56–61 (YMKLKT) the chain is Cytoplasmic. Residues 62–89 (VASVFLLNLALADICFLLTLPLWAVYTA) traverse the membrane as a helical segment. Residues 90-98 (MEYRWPFGN) are Extracellular-facing. A helical membrane pass occupies residues 99-125 (YLCKIASASVSFNLYASVFLLTCLSID). At 126-141 (RYLAIVHPMKSRLRRT) the chain is on the cytoplasmic side. A helical membrane pass occupies residues 142–165 (MLVAKVTCVIIWLMAGLASLPAVI). The Extracellular segment spans residues 166–190 (HRNVFFIENTNITVCAFHYESQNST). Arg-167 lines the angiotensin II pocket. N-linked (GlcNAc...) asparagine glycosylation occurs at Asn-176. Angiotensin II-binding residues include Phe-182, His-183, and Tyr-184. The N-linked (GlcNAc...) asparagine glycan is linked to Asn-188. Residues 191–216 (LPIGLGLTKNILGFMFPFLIILTSYT) traverse the membrane as a helical segment. An angiotensin II-binding site is contributed by Lys-199. Topologically, residues 217–239 (LIWKALKKAYEIQKNKPRNDDIF) are cytoplasmic. The chain crosses the membrane as a helical span at residues 240–268 (KIIMAIVLFFFFSWVPHQIFTFLDVLIQL). Over 269–278 (GIIHDCKISD) the chain is Extracellular. Residues 279-304 (IVDTAMPITICIAYFNNCLNPLFYGF) form a helical membrane-spanning segment. The Cytoplasmic segment spans residues 305 to 359 (LGKKFKKYFLQLLKYIPPKAKSHSTLSTKMSTLSYRPSDNVSSSAKKPVQCFEVE). The segment covering 337–349 (LSYRPSDNVSSSA) has biased composition (polar residues). Positions 337–359 (LSYRPSDNVSSSAKKPVQCFEVE) are disordered. Cys-355 carries S-palmitoyl cysteine lipidation.

It belongs to the G-protein coupled receptor 1 family. As to quaternary structure, interacts with MAS1. Interacts with ARRB1. Interacts with FLNA (via filamin repeat 21); increases PKA-mediated phosphorylation of FLNA. Post-translationally, C-terminal Ser or Thr residues may be phosphorylated. In terms of tissue distribution, expressed in liver, kidney, adrenal gland, heart and colon.

It is found in the cell membrane. Its function is as follows. Receptor for angiotensin II, a vasoconstricting peptide, which acts as a key regulator of blood pressure and sodium retention by the kidney. The activated receptor in turn couples to G-alpha proteins G(q) (GNAQ, GNA11, GNA14 or GNA15) and thus activates phospholipase C and increases the cytosolic Ca(2+) concentrations, which in turn triggers cellular responses such as stimulation of protein kinase C. The polypeptide is Type-1 angiotensin II receptor (AGTR1) (Cavia porcellus (Guinea pig)).